The sequence spans 449 residues: Nucleoprotein (449 aa).

Residues 1–55 (MSFTPGKQSSSRASSGNRSGNGILKWADQSDQSRNVQTRGRRVQSKQTATSQQPS) form a disordered region. The span at 9–22 (SSSRASSGNRSGNG) shows a compositional bias: low complexity. Composition is skewed to polar residues over residues 29–38 (QSDQSRNVQT) and 45–55 (SKQTATSQQPS). The segment at 52-194 (QQPSGGTVVP…GYYIEGSGRS (143 aa)) is RNA-binding. A CoV N NTD domain is found at 61–190 (PYYSWFSGIT…VLPQGYYIEG (130 aa)). Arginine 106, arginine 122, and arginine 164 together coordinate RNA. 3 disordered regions span residues 158–231 (PADI…VTPD), 266–297 (ILNKPRQKRSPNKQCTVQQCFGKRGPNQNFGG), and 387–449 (MMNI…TSEI). Position 167 is a phosphoserine; by host (serine 167). Threonine 174 carries the phosphothreonine; by host modification. A Phosphoserine; by host modification is found at serine 191. Polar residues-rich tracts occupy residues 194–204 (SAPNSRSTSRA) and 212–227 (GSRSRANSGNRTSTPG). In terms of domain architecture, CoV N CTD spans 259-384 (AKEVRQKILN…QNLNAYQHQE (126 aa)). Over residues 266–276 (ILNKPRQKRSP) the composition is skewed to basic residues. Positions 266 to 385 (ILNKPRQKRS…NLNAYQHQED (120 aa)) are dimerization. Serine 391 is modified (phosphoserine; by host). Residues 400 to 410 (QKNGQVENDNI) are compositionally biased toward polar residues. Basic and acidic residues predominate over residues 423 to 440 (KSRELTAEDISLLKKMDE). Serine 424 is modified (phosphoserine; by host). Threonine 428 is subject to Phosphothreonine; by host.

Belongs to the betacoronavirus nucleocapsid protein family. In terms of assembly, homooligomer. Both monomeric and oligomeric forms interact with RNA. Interacts with protein M. Interacts with NSP3; this interaction serves to tether the genome to the newly translated replicase-transcriptase complex at a very early stage of infection. Post-translationally, ADP-ribosylated. The ADP-ribosylation is retained in the virion during infection. In terms of processing, phosphorylated on serine and threonine residues.

It localises to the virion. The protein resides in the host endoplasmic reticulum-Golgi intermediate compartment. It is found in the host Golgi apparatus. Functionally, packages the positive strand viral genome RNA into a helical ribonucleocapsid (RNP) and plays a fundamental role during virion assembly through its interactions with the viral genome and membrane protein M. Plays an important role in enhancing the efficiency of subgenomic viral RNA transcription as well as viral replication. This is Nucleoprotein from Sus scrofa (Pig).